The primary structure comprises 163 residues: Interleukin-17F (163 aa).

A signal peptide spans 1–30 (MTVKSLHVTAMVKYLLLLILGLAFLRETAA). N-linked (GlcNAc...) asparagine glycosylation occurs at Asn83. 2 disulfide bridges follow: Cys102-Cys152 and Cys107-Cys154.

This sequence belongs to the IL-17 family. Homodimer; disulfide-linked. Heterodimer with IL17A (IL17A-IL17F). Forms complexes with IL17RA and IL17RC receptors with 2:1 binding stoichiometry: two receptor chains for one interleukin molecule. IL17F homodimer forms predominantly complexes with IL17RC homodimer, whereas IL17A-IL17F favors complexes with IL17RA-IL17RC. IL17RA and IL17RC chains cannot distinguish between IL17A and IL17F molecules, potentially enabling the formation of topologically distinct complexes.

The protein localises to the secreted. In terms of biological role, effector cytokine of innate and adaptive immune system involved in antimicrobial host defense and maintenance of tissue integrity. IL17A-IL17F signals via IL17RA-IL17RC heterodimeric receptor complex, triggering homotypic interaction of IL17RA and IL17RC chains with TRAF3IP2 adapter through SEFIR domains. This leads to downstream TRAF6-mediated activation of NF-kappa-B and MAPkinase pathways ultimately resulting in transcriptional activation of cytokines, chemokines, antimicrobial peptides and matrix metalloproteinases, with potential strong immune inflammation. IL17A-IL17F is primarily involved in host defense against extracellular bacteria and fungi by inducing neutrophilic inflammation. As signature effector cytokine of T-helper 17 cells (Th17), primarily induces neutrophil activation and recruitment at infection and inflammatory sites. Stimulates the production of antimicrobial beta-defensins DEFB1, DEFB103A, and DEFB104A by mucosal epithelial cells, limiting the entry of microbes through the epithelial barriers. IL17F homodimer can signal via IL17RC homodimeric receptor complex, triggering downstream activation of TRAF6 and NF-kappa-B signaling pathway. Via IL17RC induces transcriptional activation of IL33, a potent cytokine that stimulates group 2 innate lymphoid cells and adaptive T-helper 2 cells involved in pulmonary allergic response to fungi. Likely via IL17RC, promotes sympathetic innervation of peripheral organs by coordinating the communication between gamma-delta T cells and parenchymal cells. Stimulates sympathetic innervation of thermogenic adipose tissue by driving TGFB1 expression. Regulates the composition of intestinal microbiota and immune tolerance by inducing antimicrobial proteins that specifically control the growth of commensal Firmicutes and Bacteroidetes. This Callithrix jacchus (White-tufted-ear marmoset) protein is Interleukin-17F (IL17F).